Here is a 66-residue protein sequence, read N- to C-terminus: Large ribosomal subunit protein uL29 (66 aa).

The protein belongs to the universal ribosomal protein uL29 family.

The polypeptide is Large ribosomal subunit protein uL29 (Bacillus licheniformis (strain ATCC 14580 / DSM 13 / JCM 2505 / CCUG 7422 / NBRC 12200 / NCIMB 9375 / NCTC 10341 / NRRL NRS-1264 / Gibson 46)).